The sequence spans 115 residues: NADH-ubiquinone oxidoreductase chain 3 (115 aa).

Helical transmembrane passes span 4-24 (LLVLLVNSILSLLLILIAFWL), 55-75 (FFLVAITFLLFDLEIALLLPL), and 87-107 (MTLTSFILISVLALGLAYEWL).

It belongs to the complex I subunit 3 family. Core subunit of respiratory chain NADH dehydrogenase (Complex I) which is composed of 45 different subunits. Interacts with TMEM186. Interacts with TMEM242.

The protein resides in the mitochondrion inner membrane. It carries out the reaction a ubiquinone + NADH + 5 H(+)(in) = a ubiquinol + NAD(+) + 4 H(+)(out). In terms of biological role, core subunit of the mitochondrial membrane respiratory chain NADH dehydrogenase (Complex I) which catalyzes electron transfer from NADH through the respiratory chain, using ubiquinone as an electron acceptor. Essential for the catalytic activity of complex I. This Peromyscus eremicus (Cactus mouse) protein is NADH-ubiquinone oxidoreductase chain 3.